The following is a 111-amino-acid chain: Ig kappa chain V region 3368 (111 aa).

The interval 1–24 (ADIVMTQTPSSVSAAVGGTVTIKC) is framework-1. A complementarity-determining-1 region spans residues 25–35 (QASESIGNELA). The tract at residues 36-50 (WYQQKPGQPPKLLIY) is framework-2. The tract at residues 51 to 57 (RASKLAS) is complementarity-determining-2. Residues 58–89 (GVSSRFKGSGSGTEFTLTISGVQCDDAGIYYC) are framework-3. The complementarity-determining-3 stretch occupies residues 90 to 101 (QQDWNSNNVVNN). Residues 102-111 (FGGGTEVVVK) are framework-4.

The polypeptide is Ig kappa chain V region 3368 (Oryctolagus cuniculus (Rabbit)).